A 208-amino-acid chain; its full sequence is Small ribosomal subunit protein uS4 (208 aa).

Residues 95 to 159 enclose the S4 RNA-binding domain; the sequence is RRIDNIVYRA…FKKLVRSNIE (65 aa).

The protein belongs to the universal ribosomal protein uS4 family. Part of the 30S ribosomal subunit. Contacts protein S5. The interaction surface between S4 and S5 is involved in control of translational fidelity.

Its function is as follows. One of the primary rRNA binding proteins, it binds directly to 16S rRNA where it nucleates assembly of the body of the 30S subunit. Functionally, with S5 and S12 plays an important role in translational accuracy. The sequence is that of Small ribosomal subunit protein uS4 from Borrelia recurrentis (strain A1).